Here is a 208-residue protein sequence, read N- to C-terminus: Large ribosomal subunit protein bL25 (208 aa).

The disordered stretch occupies residues 178-208 (LPPQQSEVPEPDSEEEPKEPEAIKEKDNDGE). Residues 186–195 (PEPDSEEEPK) are compositionally biased toward acidic residues. The span at 196-208 (EPEAIKEKDNDGE) shows a compositional bias: basic and acidic residues.

The protein belongs to the bacterial ribosomal protein bL25 family. CTC subfamily. As to quaternary structure, part of the 50S ribosomal subunit; part of the 5S rRNA/L5/L18/L25 subcomplex. Contacts the 5S rRNA. Binds to the 5S rRNA independently of L5 and L18.

Functionally, this is one of the proteins that binds to the 5S RNA in the ribosome where it forms part of the central protuberance. The polypeptide is Large ribosomal subunit protein bL25 (Bacillus pumilus (strain SAFR-032)).